The primary structure comprises 220 residues: Ribosomal RNA large subunit methyltransferase E (220 aa).

Residues G60, W62, D92, D108, and D133 each coordinate S-adenosyl-L-methionine. K173 serves as the catalytic Proton acceptor. The disordered stretch occupies residues 197-220 (RKPKASRDKSSETFILGRQLKQPR).

This sequence belongs to the class I-like SAM-binding methyltransferase superfamily. RNA methyltransferase RlmE family.

It is found in the cytoplasm. The catalysed reaction is uridine(2552) in 23S rRNA + S-adenosyl-L-methionine = 2'-O-methyluridine(2552) in 23S rRNA + S-adenosyl-L-homocysteine + H(+). In terms of biological role, specifically methylates the uridine in position 2552 of 23S rRNA at the 2'-O position of the ribose in the fully assembled 50S ribosomal subunit. This is Ribosomal RNA large subunit methyltransferase E from Burkholderia ambifaria (strain MC40-6).